Reading from the N-terminus, the 338-residue chain is Probable dual-specificity RNA methyltransferase RlmN (338 aa).

Glu-89 (proton acceptor) is an active-site residue. Residues 95–325 (HNYGMSACVT…AILRKEQGHD (231 aa)) form the Radical SAM core domain. Cys-102 and Cys-330 are oxidised to a cystine. [4Fe-4S] cluster is bound by residues Cys-109, Cys-113, and Cys-116. S-adenosyl-L-methionine is bound by residues 156 to 157 (GE), Ser-188, 211 to 213 (SLH), and Asn-287. Catalysis depends on Cys-330, which acts as the S-methylcysteine intermediate.

The protein belongs to the radical SAM superfamily. RlmN family. [4Fe-4S] cluster is required as a cofactor.

The protein localises to the cytoplasm. It catalyses the reaction adenosine(2503) in 23S rRNA + 2 reduced [2Fe-2S]-[ferredoxin] + 2 S-adenosyl-L-methionine = 2-methyladenosine(2503) in 23S rRNA + 5'-deoxyadenosine + L-methionine + 2 oxidized [2Fe-2S]-[ferredoxin] + S-adenosyl-L-homocysteine. The enzyme catalyses adenosine(37) in tRNA + 2 reduced [2Fe-2S]-[ferredoxin] + 2 S-adenosyl-L-methionine = 2-methyladenosine(37) in tRNA + 5'-deoxyadenosine + L-methionine + 2 oxidized [2Fe-2S]-[ferredoxin] + S-adenosyl-L-homocysteine. Its function is as follows. Specifically methylates position 2 of adenine 2503 in 23S rRNA and position 2 of adenine 37 in tRNAs. This is Probable dual-specificity RNA methyltransferase RlmN from Acholeplasma laidlawii (strain PG-8A).